A 678-amino-acid polypeptide reads, in one-letter code: uncharacterized protein (678 aa).

2 helical membrane-spanning segments follow: residues 14-34 (LMFAGAGPGPMLAAASAWTGL) and 180-200 (GAVIIAGFPFLDLGNVTIGGF).

It belongs to the mycobacterial PPE family.

It localises to the cell membrane. This is an uncharacterized protein from Mycobacterium tuberculosis (strain CDC 1551 / Oshkosh).